Consider the following 1238-residue polypeptide: MPAPHRLYPRSLICLAQALLVWALLAWAPAQASQELTLVGKAAVPDVEIALDGDDWRWLARKRVLTLGVYAPDIPPFDVTYDERYEGLTADYMAIIAHNLGVQAKVLRYPTREQAVGALESGQIDLIGTVNGIEGRLQSLRLSVPYAADHPVLVMPIGARRAPPADLAGQRLAVDANYLPRETLQQAYPQATLHYFPSSEQALAAVAYGQADVFIGDALTTSHLVSQSYFNDVRVVAPAQIVTGGESFGVRADNTRLLRVVNAVLEAIPASERRSLIYRWGLGSSISLDFARPAYSAREQQWMANHPVVKVAVLNLFAPFTLFRTDEQFGGISAAVLQLLQLRTGLDFQIIGVDTVEELIAKLRSGEADMAGALFVNAARESVLSFSRPYVRNGMVIVTRQDPAAPADADHLDGRTIAMVRNSAAIPLLQQRYPQAKVVTADNPTEAMLLVADGQADAVVQTQISASYYVNRYFAGKLRIASALDLPPAEIALATARGQTELISILNKALYSISNDELASIVSRWRGSDGDPRTWYAYRNEIYLLIGLGLLSALLFLSWIVYLRRQIRQRKRAERALNDQLEFMRVLIDGTPNPIYVRDKEGRMLLCNDAYLDTFGVTADAVLGKTIPEANVVGDPALAREMHEFLLTRMAAEREPRFEDRDVTLHGRTRHVYQWTVPYGDSLGELKGIIGGWIDITERAELLRELHDAKESADAANRAKTTFLATMSHEIRTPMNAIIGMLELALLRPADQEPDRQSIQVAYDSARSLLELIGDILDIAKIEAGKFDLAPVRTALRALPEGAIRLFDGLARQKGIELVLKTDIVGVDDVLIDPLRMKQVLSNLVGNAIKFTTEGQVVLTVTARPDGEAAHVQFSVSDTGCGISEADQRQLFKPFSQVGGSAEAGPAPGTGLGLSISRRLVELMGGTLVMRSAPGVGTTVSVDLRLTMIEKSAQATPPAAAAQATPSKPQVSLRVLVVDDHKPNLMLLRQQLDYLGQRVVAADSGEAALALWHEHAFDVVITDCNMPGINGYELARRIRAAEAAPGYGRTRCILFGFTASAQMDEAQRCRAAGMDDCLFKPIGVDALRQRLNEAAARAALPTPPSPQAAAPATHDATPAAFSAESILALTQNDEALIRQLLEEVIRTNRADVDQLQKLHQQADWPKVSDMAHRLAGGARVVDAKAMIDTALALEKKAQGQAGPSPEIDGLVRTLAAQSAALETQLRAWLEQRPHQGQP.

The first 32 residues, 1–32 (MPAPHRLYPRSLICLAQALLVWALLAWAPAQA), serve as a signal peptide directing secretion. At 33–307 (SQELTLVGKA…REQQWMANHP (275 aa)) the chain is on the cytoplasmic side. Residues 308–331 (VVKVAVLNLFAPFTLFRTDEQFGG) traverse the membrane as a helical segment. At 332–541 (ISAAVLQLLQ…PRTWYAYRNE (210 aa)) the chain is on the periplasmic side. The chain crosses the membrane as a helical span at residues 542 to 563 (IYLLIGLGLLSALLFLSWIVYL). Topologically, residues 564 to 1238 (RRQIRQRKRA…LEQRPHQGQP (675 aa)) are cytoplasmic. In terms of domain architecture, PAS spans 580-651 (QLEFMRVLID…MHEFLLTRMA (72 aa)). Residues 652-708 (AEREPRFEDRDVTLHGRTRHVYQWTVPYGDSLGELKGIIGGWIDITERAELLRELHD) form the PAC domain. Residues 726–948 (TMSHEIRTPM…TVSVDLRLTM (223 aa)) enclose the Histidine kinase domain. H729 bears the Phosphohistidine; by autocatalysis mark. Residues 974 to 1095 (RVLVVDDHKP…ALRQRLNEAA (122 aa)) enclose the Response regulatory domain. D1023 is subject to 4-aspartylphosphate. Positions 1133–1228 (DEALIRQLLE…AALETQLRAW (96 aa)) constitute an HPt domain. At H1172 the chain carries Phosphohistidine.

Post-translationally, activation requires a sequential transfer of a phosphate group from a His in the primary transmitter domain, to an Asp in the receiver domain and to a His in the secondary transmitter domain.

Its subcellular location is the cell inner membrane. It catalyses the reaction ATP + protein L-histidine = ADP + protein N-phospho-L-histidine.. Functionally, member of the two-component regulatory system BvgS/BvgA. Phosphorylates BvgA via a four-step phosphorelay in response to environmental signals. The chain is Virulence sensor protein BvgS (bvgS) from Bordetella parapertussis (strain 12822 / ATCC BAA-587 / NCTC 13253).